Consider the following 157-residue polypeptide: Ribosome maturation factor RimM (157 aa).

Residues 89–156 (PGEYYHVDLI…DRLLIDPEFV (68 aa)) form the PRC barrel domain.

The protein belongs to the RimM family. In terms of assembly, binds ribosomal protein uS19.

The protein resides in the cytoplasm. Functionally, an accessory protein needed during the final step in the assembly of 30S ribosomal subunit, possibly for assembly of the head region. Essential for efficient processing of 16S rRNA. May be needed both before and after RbfA during the maturation of 16S rRNA. It has affinity for free ribosomal 30S subunits but not for 70S ribosomes. This chain is Ribosome maturation factor RimM, found in Rhizorhabdus wittichii (strain DSM 6014 / CCUG 31198 / JCM 15750 / NBRC 105917 / EY 4224 / RW1) (Sphingomonas wittichii).